The chain runs to 211 residues: Thiamine-phosphate synthase (211 aa).

4-amino-2-methyl-5-(diphosphooxymethyl)pyrimidine is bound by residues 35 to 39 and Asn-67; that span reads QLRDK. Residues Asp-68 and Asp-87 each contribute to the Mg(2+) site. Ser-106 provides a ligand contact to 4-amino-2-methyl-5-(diphosphooxymethyl)pyrimidine. A 2-[(2R,5Z)-2-carboxy-4-methylthiazol-5(2H)-ylidene]ethyl phosphate-binding site is contributed by 132 to 134; that stretch reads TGS. Lys-135 is a binding site for 4-amino-2-methyl-5-(diphosphooxymethyl)pyrimidine. 2-[(2R,5Z)-2-carboxy-4-methylthiazol-5(2H)-ylidene]ethyl phosphate contacts are provided by residues Gly-163 and 183-184; that span reads IS.

Belongs to the thiamine-phosphate synthase family. Mg(2+) is required as a cofactor.

The enzyme catalyses 2-[(2R,5Z)-2-carboxy-4-methylthiazol-5(2H)-ylidene]ethyl phosphate + 4-amino-2-methyl-5-(diphosphooxymethyl)pyrimidine + 2 H(+) = thiamine phosphate + CO2 + diphosphate. It catalyses the reaction 2-(2-carboxy-4-methylthiazol-5-yl)ethyl phosphate + 4-amino-2-methyl-5-(diphosphooxymethyl)pyrimidine + 2 H(+) = thiamine phosphate + CO2 + diphosphate. The catalysed reaction is 4-methyl-5-(2-phosphooxyethyl)-thiazole + 4-amino-2-methyl-5-(diphosphooxymethyl)pyrimidine + H(+) = thiamine phosphate + diphosphate. It functions in the pathway cofactor biosynthesis; thiamine diphosphate biosynthesis; thiamine phosphate from 4-amino-2-methyl-5-diphosphomethylpyrimidine and 4-methyl-5-(2-phosphoethyl)-thiazole: step 1/1. Its function is as follows. Condenses 4-methyl-5-(beta-hydroxyethyl)thiazole monophosphate (THZ-P) and 2-methyl-4-amino-5-hydroxymethyl pyrimidine pyrophosphate (HMP-PP) to form thiamine monophosphate (TMP). This Methanoculleus marisnigri (strain ATCC 35101 / DSM 1498 / JR1) protein is Thiamine-phosphate synthase.